Here is a 99-residue protein sequence, read N- to C-terminus: Malonate decarboxylase acyl carrier protein (99 aa).

S25 is subject to O-(phosphoribosyl dephospho-coenzyme A)serine.

The protein belongs to the MdcC family. Covalently binds the prosthetic group of malonate decarboxylase.

It is found in the cytoplasm. In terms of biological role, subunit of malonate decarboxylase, it is an acyl carrier protein to which acetyl and malonyl thioester residues are bound via a 2'-(5''-phosphoribosyl)-3'-dephospho-CoA prosthetic group and turn over during the catalytic mechanism. The protein is Malonate decarboxylase acyl carrier protein of Stutzerimonas stutzeri (strain A1501) (Pseudomonas stutzeri).